A 90-amino-acid polypeptide reads, in one-letter code: Sec-independent protein translocase protein TatA (90 aa).

The helical transmembrane segment at methionine 1 to glycine 21 threads the bilayer. Residues glycine 42–glycine 90 form a disordered region.

Belongs to the TatA/E family. The Tat system comprises two distinct complexes: a TatABC complex, containing multiple copies of TatA, TatB and TatC subunits, and a separate TatA complex, containing only TatA subunits. Substrates initially bind to the TatABC complex, which probably triggers association of the separate TatA complex to form the active translocon.

It is found in the cell inner membrane. Part of the twin-arginine translocation (Tat) system that transports large folded proteins containing a characteristic twin-arginine motif in their signal peptide across membranes. TatA could form the protein-conducting channel of the Tat system. This is Sec-independent protein translocase protein TatA from Methylobacterium nodulans (strain LMG 21967 / CNCM I-2342 / ORS 2060).